A 564-amino-acid polypeptide reads, in one-letter code: ATP-dependent RNA helicase ROK1 (564 aa).

2 disordered regions span residues Met-1–Ile-45 and Glu-62–Ile-87. 3 stretches are compositionally biased toward basic and acidic residues: residues Val-13 to Ala-23, Asp-33 to Ile-45, and Glu-62 to Leu-86. The Q motif motif lies at Asp-122–Cys-150. The Helicase ATP-binding domain maps to Ile-153–Val-333. Gly-166–Thr-173 provides a ligand contact to ATP. Positions Asp-280–Asp-283 match the DEAD box motif. The region spanning Asn-344–Ala-506 is the Helicase C-terminal domain. The tract at residues Glu-512–Lys-564 is disordered. Over residues Lys-553–Lys-564 the composition is skewed to basic and acidic residues.

This sequence belongs to the DEAD box helicase family. DDX52/ROK1 subfamily. Interacts with the U3 snoRNA and is associated with the 90S and 40S pre-ribosomes. This association requires the presence of RRP5. Also interacts with OSH3.

The protein resides in the nucleus. The protein localises to the nucleolus. The enzyme catalyses ATP + H2O = ADP + phosphate + H(+). Functionally, ATP-dependent RNA helicase involved in 40S ribosomal subunit biogenesis. Required for the processing and cleavage of 35S pre-rRNA at sites A0, A1, and A2, leading to mature 18S rRNA. May also have a gene-specific regulatory function since it affects nuclear fusion by regulating KAR4 expression and contributes with KEM1 to ISP-1 sensitivity. In Saccharomyces cerevisiae (strain ATCC 204508 / S288c) (Baker's yeast), this protein is ATP-dependent RNA helicase ROK1 (ROK1).